A 284-amino-acid polypeptide reads, in one-letter code: TnP I resolvase (284 aa).

Positions 1-84 constitute a Core-binding (CB) domain; that stretch reads MDVAKQFSSY…SLAKFNEFLI (84 aa). The 176-residue stretch at 107-282 folds into the Tyr recombinase domain; the sequence is ASPTQIVELD…NQLQLKNKME (176 aa). Active-site residues include R145, K170, H234, R237, and H260. Y269 functions as the O-(3'-phospho-DNA)-tyrosine intermediate in the catalytic mechanism.

This sequence belongs to the 'phage' integrase family.

Resolvase catalyzes the resolution (a site-specific recombination) of the cointegrated replicon to yield the final transposition products. The protein is TnP I resolvase (tnpI) of Bacillus thuringiensis.